The following is a 409-amino-acid chain: Glutamyl-tRNA(Gln) amidotransferase subunit D (409 aa).

In terms of domain architecture, Asparaginase/glutaminase spans 68 to 390 (RKISVLATGG…DLFRDLFRKN (323 aa)). Residues threonine 78, threonine 152, aspartate 153, and lysine 230 contribute to the active site.

This sequence belongs to the asparaginase 1 family. GatD subfamily. In terms of assembly, heterodimer of GatD and GatE.

The catalysed reaction is L-glutamyl-tRNA(Gln) + L-glutamine + ATP + H2O = L-glutaminyl-tRNA(Gln) + L-glutamate + ADP + phosphate + H(+). Functionally, allows the formation of correctly charged Gln-tRNA(Gln) through the transamidation of misacylated Glu-tRNA(Gln) in organisms which lack glutaminyl-tRNA synthetase. The reaction takes place in the presence of glutamine and ATP through an activated gamma-phospho-Glu-tRNA(Gln). The GatDE system is specific for glutamate and does not act on aspartate. The protein is Glutamyl-tRNA(Gln) amidotransferase subunit D of Thermoplasma acidophilum (strain ATCC 25905 / DSM 1728 / JCM 9062 / NBRC 15155 / AMRC-C165).